Here is a 219-residue protein sequence, read N- to C-terminus: Small ribosomal subunit protein uS3 (219 aa).

The region spanning 39–107 (LRKFLKKKLH…EVLIDIQEVR (69 aa)) is the KH type-2 domain.

The protein belongs to the universal ribosomal protein uS3 family. As to quaternary structure, part of the 30S ribosomal subunit. Forms a tight complex with proteins S10 and S14.

Binds the lower part of the 30S subunit head. Binds mRNA in the 70S ribosome, positioning it for translation. The sequence is that of Small ribosomal subunit protein uS3 from Desulfatibacillum aliphaticivorans.